Here is a 757-residue protein sequence, read N- to C-terminus: GTPase-activating protein GYP7 (757 aa).

In terms of domain architecture, Rab-GAP TBC spans 395-640; that stretch reads GLEDCIRGEA…SLWEILWTDY (246 aa). The segment at 482–507 is disordered; sequence GVGSDRLPTTRESSPETPDEADDDEF. Positions 498-507 are enriched in acidic residues; sequence TPDEADDDEF.

Its function is as follows. Most effectively accelerate the intrinsic GTPase activity of YPT7. It is also active, but to a lesser extent, on YPT31, YPT32 and YPT1. YPT6 and SEC4. The sequence is that of GTPase-activating protein GYP7 (GYP7) from Debaryomyces hansenii (strain ATCC 36239 / CBS 767 / BCRC 21394 / JCM 1990 / NBRC 0083 / IGC 2968) (Yeast).